A 364-amino-acid polypeptide reads, in one-letter code: Fructose-1,6-bisphosphatase class 1 2 (364 aa).

Mg(2+)-binding residues include E101, D123, L125, and D126. Substrate-binding positions include 126–129 and N218; that span reads DGSS. E290 contributes to the Mg(2+) binding site.

It belongs to the FBPase class 1 family. Homotetramer. Requires Mg(2+) as cofactor.

The protein localises to the cytoplasm. It catalyses the reaction beta-D-fructose 1,6-bisphosphate + H2O = beta-D-fructose 6-phosphate + phosphate. It functions in the pathway carbohydrate biosynthesis; gluconeogenesis. This Cupriavidus taiwanensis (strain DSM 17343 / BCRC 17206 / CCUG 44338 / CIP 107171 / LMG 19424 / R1) (Ralstonia taiwanensis (strain LMG 19424)) protein is Fructose-1,6-bisphosphatase class 1 2.